The sequence spans 563 residues: Coiled-coil domain-containing protein 63 (563 aa).

Positions 1 to 29 (MSVLKKNRRKDSDTPQEPSEKAKEQQAEA) are disordered. Over residues 10-29 (KDSDTPQEPSEKAKEQQAEA) the composition is skewed to basic and acidic residues. 3 coiled-coil regions span residues 18–201 (PSEK…QLQH), 233–291 (AMKD…AKKH), and 341–422 (TELN…KKIN).

Functionally, plays a role in spermiogenesis. Involved in the elongation of flagella and the formation of sperm heads. In Homo sapiens (Human), this protein is Coiled-coil domain-containing protein 63.